The sequence spans 62 residues: uncharacterized protein (62 aa).

The interval 1–62 (MTSTQNLKDK…PPKKSLSQLP (62 aa)) is disordered. Residues 7–29 (LKDKFEEEIRQQKEGKGKKEKVW) show a composition bias toward basic and acidic residues. Polar residues predominate over residues 32–43 (HSDSSYNKQTAV).

This is an uncharacterized protein from Dictyostelium discoideum (Social amoeba).